We begin with the raw amino-acid sequence, 377 residues long: Alanine racemase, catabolic (377 aa).

Lys51 serves as the catalytic Proton acceptor; specific for D-alanine. Lys51 is modified (N6-(pyridoxal phosphate)lysine). Residue Arg150 participates in substrate binding. The Proton acceptor; specific for L-alanine role is filled by Tyr272. Residue Met320 participates in substrate binding.

Belongs to the alanine racemase family. Requires pyridoxal 5'-phosphate as cofactor.

It carries out the reaction L-alanine = D-alanine. Its function is as follows. Isomerizes L-alanine to D-alanine which is then oxidized to pyruvate by DadA. This Rhizobium johnstonii (strain DSM 114642 / LMG 32736 / 3841) (Rhizobium leguminosarum bv. viciae) protein is Alanine racemase, catabolic (dadX).